The chain runs to 311 residues: Aspartate carbamoyltransferase catalytic subunit (311 aa).

2 residues coordinate carbamoyl phosphate: R59 and T60. K87 contacts L-aspartate. R109, H139, and Q142 together coordinate carbamoyl phosphate. Residues R172 and R224 each contribute to the L-aspartate site. The carbamoyl phosphate site is built by A265 and P266.

This sequence belongs to the aspartate/ornithine carbamoyltransferase superfamily. ATCase family. In terms of assembly, heterododecamer (2C3:3R2) of six catalytic PyrB chains organized as two trimers (C3), and six regulatory PyrI chains organized as three dimers (R2).

It carries out the reaction carbamoyl phosphate + L-aspartate = N-carbamoyl-L-aspartate + phosphate + H(+). It functions in the pathway pyrimidine metabolism; UMP biosynthesis via de novo pathway; (S)-dihydroorotate from bicarbonate: step 2/3. Its function is as follows. Catalyzes the condensation of carbamoyl phosphate and aspartate to form carbamoyl aspartate and inorganic phosphate, the committed step in the de novo pyrimidine nucleotide biosynthesis pathway. In Streptococcus pyogenes serotype M4 (strain MGAS10750), this protein is Aspartate carbamoyltransferase catalytic subunit.